An 867-amino-acid chain; its full sequence is DNA endonuclease RBBP8 (867 aa).

The essential for binding to the MRN complex and for RPA focus formation on DNA damage stretch occupies residues 25–48 (ELWSKLKECHDKELQELLLKINKL). 2 coiled-coil regions span residues 38-87 (LQEL…EDRL) and 120-141 (ITEL…SEQL). 2 disordered regions span residues 141-171 (LHNM…PDSP) and 448-486 (RYGK…HSML). The span at 154-166 (ENPADTGEGEDGV) shows a compositional bias: acidic residues. Residues 489 to 493 (PLDLS) carry the PXDLS motif motif. A damage-recruitment motif region spans residues 508-531 (SSRGRTKQTFALVPEKPDPKKPLH). Residues Thr-817 and Thr-829 each carry the phosphothreonine modification. Positions 843–867 (SPCQRPRRRQPYNAKFSSKIKEQKT) are disordered.

The protein belongs to the COM1/SAE2/CtIP family. Homotetramer; formed by antiparallel association of helical extensions protruding from the N-termini of two parallel coiled-coil dimers. Interacts with the MRN complex; the interaction links DNA sensing to resection. Interacts with samhd1. Phosphorylation at Thr-817 and Thr-829 promote interaction with nbn and recruitment to double-strand breaks (DSBs).

It is found in the nucleus. It localises to the chromosome. Its function is as follows. Endonuclease that cooperates with the MRE11-RAD50-NBN (MRN) complex in DNA-end resection, the first step of double-strand break (DSB) repair through the homologous recombination (HR) pathway. Functions downstream of the MRN complex and ATM, promotes ATR activation and its recruitment to DSBs in the S/G2 phase facilitating the generation of ssDNA. Specifically promotes the endonuclease activity of the MRN complex to clear DNA ends containing protein adducts: recruited to DSBs by nbn following phosphorylation, and promotes the endonuclease of mre11 to clear protein-DNA adducts and generate clean double-strand break ends. The polypeptide is DNA endonuclease RBBP8 (rbbp8) (Xenopus tropicalis (Western clawed frog)).